The sequence spans 2532 residues: Lovastatin diketide synthase lovF (2532 aa).

Residues 10–430 (PAPIAMVGMG…GANAHAIVEQ (421 aa)) enclose the Ketosynthase family 3 (KS3) domain. Active-site for beta-ketoacyl synthase activity residues include cysteine 183, histidine 318, and histidine 353. The malonyl-CoA:ACP transacylase (MAT) domain stretch occupies residues 545-870 (VFTGQGAQWF…PYLSCLSRGK (326 aa)). Residue serine 635 is the For malonyltransferase activity of the active site. Residues 941–1078 (HDLIGLQEPL…GLVRAEMDQP (138 aa)) are N-terminal hotdog fold. The dehydratase (DH) domain stretch occupies residues 941-1246 (HDLIGLQEPL…LEGLVFQSLG (306 aa)). The PKS/mFAS DH domain maps to 941–1251 (HDLIGLQEPL…FQSLGASLGT (311 aa)). Residue histidine 973 is the Proton acceptor; for dehydratase activity of the active site. Positions 1075-1094 (MDQPPSSLSNQQRIDPRPWS) are disordered. Residues 1078–1087 (PPSSLSNQQR) are compositionally biased toward polar residues. The segment at 1092 to 1251 (PWSRKTAPQE…FQSLGASLGT (160 aa)) is C-terminal hotdog fold. Aspartate 1159 (proton donor; for dehydratase activity) is an active-site residue. The interval 1423–1607 (ELVRLCCHKN…ARDCDSHEFY (185 aa)) is methyltransferase (CMet) domain. Positions 1825-2144 (GLLDSLHFTK…SGQHVGKIVV (320 aa)) are enoylreductase (ER) domain. A ketoreductase (KR) domain region spans residues 2168 to 2340 (SYLVAGGLGG…AVTIDLGMVQ (173 aa)). Residues 2453-2530 (ESIAVIMEAM…KVAEVVLQRY (78 aa)) form the Carrier domain. Serine 2490 is subject to O-(pantetheine 4'-phosphoryl)serine.

In terms of assembly, interacts with LovD. Pantetheine 4'-phosphate is required as a cofactor.

It carries out the reaction holo-[2-methylbutanoate polyketide synthase] + 2 malonyl-CoA + S-adenosyl-L-methionine + 2 NADPH + 3 H(+) = (S)-2-methylbutanoyl-[2-methylbutanoate polyketide synthase] + S-adenosyl-L-homocysteine + 2 CO2 + 2 NADP(+) + 2 CoA + H2O. It participates in polyketide biosynthesis; lovastatin biosynthesis. Lovastatin diketide synthase; part of the gene cluster that mediates the biosynthesis of lovastatin (also known as mevinolin, mevacor or monacolin K), a hypolipidemic inhibitor of (3S)-hydroxymethylglutaryl-coenzyme A (HMG-CoA) reductase (HMGR). The first step in the biosynthesis of lovastatin is the production of dihydromonacolin L acid by the lovastatin nonaketide synthase lovB and the trans-acting enoyl reductase lovC via condensation of one acetyl-CoA unit and 8 malonyl-CoA units. Dihydromonacolin L acid is released from lovB by the thioesterase lovG. Next, dihydromonacolin L acid is oxidized by the dihydromonacolin L monooxygenase lovA twice to form monacolin J acid. The 2-methylbutyrate moiety of lovastatin is synthesized by the lovastatin diketide synthase lovF via condensation of one acetyl-CoA unit and one malonyl-CoA unit. Finally, the covalent attachment of this moiety to monacolin J acid is catalyzed by the transesterase lovD to yield lovastatin. LovD has broad substrate specificity and can also convert monacolin J to simvastatin using alpha-dimethylbutanoyl-S-methyl-3-mercaptopropionate (DMB-S-MMP) as the thioester acyl donor, and can also catalyze the reverse reaction and function as hydrolase in vitro. LovD has much higher activity with LovF-bound 2-methylbutanoate than with free diketide substrates. In Aspergillus terreus, this protein is Lovastatin diketide synthase lovF.